Here is a 236-residue protein sequence, read N- to C-terminus: Purine nucleoside phosphorylase DeoD-type (236 aa).

H5 provides a ligand contact to a purine D-ribonucleoside. Phosphate contacts are provided by residues G21, R25, R44, and 88–91; that span reads RIGS. A purine D-ribonucleoside-binding positions include 180 to 182 and 204 to 205; these read EME and SD. D205 acts as the Proton donor in catalysis.

It belongs to the PNP/UDP phosphorylase family. Homohexamer; trimer of homodimers.

It carries out the reaction a purine D-ribonucleoside + phosphate = a purine nucleobase + alpha-D-ribose 1-phosphate. It catalyses the reaction a purine 2'-deoxy-D-ribonucleoside + phosphate = a purine nucleobase + 2-deoxy-alpha-D-ribose 1-phosphate. Catalyzes the reversible phosphorolytic breakdown of the N-glycosidic bond in the beta-(deoxy)ribonucleoside molecules, with the formation of the corresponding free purine bases and pentose-1-phosphate. The protein is Purine nucleoside phosphorylase DeoD-type of Hahella chejuensis (strain KCTC 2396).